Here is an 87-residue protein sequence, read N- to C-terminus: Prohibitin 1 (87 aa).

Threonine 8 is modified (phosphothreonine). At lysine 62 the chain carries N6-acetyllysine. Tyrosine 83 is modified (phosphotyrosine).

Belongs to the prohibitin family. In terms of assembly, the mitochondrial prohibitin complex consists of two subunits (PHB1 and PHB2), assembled into a membrane-associated ring-shaped supercomplex of approximately 1 mDa. Interacts with STOML2. Interacts with MAP1LC3B (membrane-bound form LC3-II); the interaction requires PHB2 and takes place upon Parkin-mediated mitochondrial damage. Interacts with STAT3 (unphosphorylated or phosphorylated at 'Ser-727'). Interacts with CLPB. Interacts with CD86 (via cytoplasmic domain); the interactions increases after priming with CD40.

The protein resides in the mitochondrion inner membrane. The protein localises to the nucleus. It localises to the cytoplasm. It is found in the cell membrane. Protein with pleiotropic attributes mediated in a cell-compartment- and tissue-specific manner, which include the plasma membrane-associated cell signaling functions, mitochondrial chaperone, and transcriptional co-regulator of transcription factors in the nucleus. Plays a role in adipose tissue and glucose homeostasis in a sex-specific manner. Contributes to pulmonary vascular remodeling by accelerating proliferation of pulmonary arterial smooth muscle cells. Functionally, in the mitochondria, together with PHB2, forms large ring complexes (prohibitin complexes) in the inner mitochondrial membrane (IMM) and functions as a chaperone protein that stabilizes mitochondrial respiratory enzymes and maintains mitochondrial integrity in the IMM, which is required for mitochondrial morphogenesis, neuronal survival, and normal lifespan. The prohibitin complex, with DNAJC19, regulates cardiolipin remodeling and the protein turnover of OMA1 in a cardiolipin-binding manner. Regulates mitochondrial respiration activity playing a role in cellular aging. The prohibitin complex plays a role of mitophagy receptor involved in targeting mitochondria for autophagic degradation. Involved in mitochondrial-mediated antiviral innate immunity, activates RIG-I-mediated signal transduction and production of IFNB1 and proinflammatory cytokine IL6. Its function is as follows. In the nucleus, acts as a transcription coregulator, enhances promoter binding by TP53, a transcription factor it activates, but reduces the promoter binding by E2F1, a transcription factor it represses. Interacts with STAT3 to affect IL17 secretion in T-helper Th17 cells. In terms of biological role, in the plasma membrane, cooperates with CD86 to mediate CD86-signaling in B lymphocytes that regulates the level of IgG1 produced through the activation of distal signaling intermediates. Upon CD40 engagement, required to activate NF-kappa-B signaling pathway via phospholipase C and protein kinase C activation. The chain is Prohibitin 1 (PHB1) from Mesocricetus auratus (Golden hamster).